The following is a 752-amino-acid chain: uncharacterized protein (752 aa).

Phosphoserine is present on residues serine 202 and serine 582. The interval 596-752 (EEEKESVEVE…KTGEDGEIVL (157 aa)) is disordered. Composition is skewed to basic and acidic residues over residues 601–613 (SVEV…KNDL) and 641–677 (LKSE…HFEV). Positions 695-718 (NNVAETILEVTSSPKSSENSQKQS) are enriched in polar residues. Phosphoserine is present on residues serine 707 and serine 738.

This is an uncharacterized protein from Schizosaccharomyces pombe (strain 972 / ATCC 24843) (Fission yeast).